We begin with the raw amino-acid sequence, 120 residues long: Movement protein TGB2 (120 aa).

Topologically, residues 1–16 (MSSTSEPTYQLAPPDS) are cytoplasmic. A helical transmembrane segment spans residues 17 to 37 (LKQVYLTLAAGFAVGLGIFLL). The Lumenal portion of the chain corresponds to 38–76 (RTNTLPHTGDNIHHLPHGGCYRDGTKSIRYNSPGVATSS). A helical membrane pass occupies residues 77–97 (NIFLPAVAVLCILALLHVPFF). The Cytoplasmic portion of the chain corresponds to 98–120 (QPDRVRRRCCRFYWCADPHHPTV).

It belongs to the Tymovirales TGBp2 protein family.

It localises to the host endoplasmic reticulum membrane. Plays a role in viral cell-to-cell propagation, by facilitating genome transport to neighboring plant cells through plasmosdesmata,. The sequence is that of Movement protein TGB2 (ORF3) from Lolium latent virus (isolate Lolium/USA/US1/-) (LoLV).